We begin with the raw amino-acid sequence, 341 residues long: Biotin synthase (341 aa).

The region spanning alanine 40–arginine 267 is the Radical SAM core domain. [4Fe-4S] cluster contacts are provided by cysteine 55, cysteine 59, and cysteine 62. [2Fe-2S] cluster is bound by residues cysteine 99, cysteine 130, cysteine 190, and arginine 262.

This sequence belongs to the radical SAM superfamily. Biotin synthase family. Homodimer. Requires [4Fe-4S] cluster as cofactor. It depends on [2Fe-2S] cluster as a cofactor.

The catalysed reaction is (4R,5S)-dethiobiotin + (sulfur carrier)-SH + 2 reduced [2Fe-2S]-[ferredoxin] + 2 S-adenosyl-L-methionine = (sulfur carrier)-H + biotin + 2 5'-deoxyadenosine + 2 L-methionine + 2 oxidized [2Fe-2S]-[ferredoxin]. It participates in cofactor biosynthesis; biotin biosynthesis; biotin from 7,8-diaminononanoate: step 2/2. Its function is as follows. Catalyzes the conversion of dethiobiotin (DTB) to biotin by the insertion of a sulfur atom into dethiobiotin via a radical-based mechanism. This is Biotin synthase from Xylella fastidiosa (strain 9a5c).